A 370-amino-acid polypeptide reads, in one-letter code: ATP/GTP phosphatase (370 aa).

The catalysed reaction is ATP + H2O = ADP + phosphate + H(+). The enzyme catalyses GTP + H2O = GDP + phosphate + H(+). Functionally, has nucleotide phosphatase activity toward ATP and GTP, but not toward CTP, TTP and ADP. This Helicobacter pylori (strain ATCC 700392 / 26695) (Campylobacter pylori) protein is ATP/GTP phosphatase.